The primary structure comprises 1230 residues: Soluble starch synthase 3, chloroplastic/amyloplastic (1230 aa).

The N-terminal 60 residues, 1–60 (MDVPFPLHRSLSCTSVSNAITHLKIKPILGFVSHGTTSLSVQSSSWRKDGMVTGVSFSIC), are a transit peptide targeting the chloroplast. Residues 66–189 (RRRRKVSTPR…KDAVKLNKSK (124 aa)) form a disordered region. Residues 124–145 (VEARVETSDDDTKGVVRDHKFL) are compositionally biased toward basic and acidic residues. Over residues 152-170 (NGSTKSISMSPVRVSSQFV) the composition is skewed to polar residues. The segment covering 177–189 (GDDKDAVKLNKSK) has biased composition (basic and acidic residues). Residue lysine 794 coordinates ADP-alpha-D-glucose.

The protein belongs to the glycosyltransferase 1 family. Bacterial/plant glycogen synthase subfamily. Tuber, sink and source leaves.

It localises to the plastid. The protein resides in the chloroplast. The protein localises to the amyloplast. The catalysed reaction is [(1-&gt;4)-alpha-D-glucosyl](n) + ADP-alpha-D-glucose = [(1-&gt;4)-alpha-D-glucosyl](n+1) + ADP + H(+). Its pathway is glycan biosynthesis; starch biosynthesis. In terms of biological role, may account for most of the soluble starch synthase activity in the tubers. Contributes only a tiny percentage of the granule-bound activity, but may also contribute to the deposition of transient starch in chloroplasts of leaves. The chain is Soluble starch synthase 3, chloroplastic/amyloplastic (SS3) from Solanum tuberosum (Potato).